The sequence spans 474 residues: Alpha-galactosidase (474 aa).

Positions 1-22 are cleaved as a signal peptide; it reads MINFSLLTSIVLLASKVVGVSP. Cystine bridges form between Cys43-Cys75 and Cys122-Cys152. The N-linked (GlcNAc...) asparagine glycan is linked to Asn44. Positions 73, 74, and 148 each coordinate substrate. Catalysis depends on Asp150, which acts as the Nucleophile. The N-linked (GlcNAc...) asparagine glycan is linked to Asn176. A substrate-binding site is contributed by Arg206. Asp210 serves as the catalytic Proton donor. 2 disulfide bridges follow: Cys222–Cys238 and Cys224–Cys231. Gln252 provides a ligand contact to substrate. 5 N-linked (GlcNAc...) asparagine glycosylation sites follow: Asn271, Asn414, Asn423, Asn436, and Asn455.

This sequence belongs to the glycosyl hydrolase 27 family. In terms of assembly, homotetramer.

It localises to the secreted. The catalysed reaction is Hydrolysis of terminal, non-reducing alpha-D-galactose residues in alpha-D-galactosides, including galactose oligosaccharides, galactomannans and galactolipids.. This Torulaspora delbrueckii (Yeast) protein is Alpha-galactosidase (MEL).